The sequence spans 326 residues: uncharacterized protein (326 aa).

Solcar repeat units follow at residues 15-106 (EFLV…VRRV), 114-215 (ETHA…ATDF), and 234-322 (LKTW…SKAL). A run of 6 helical transmembrane segments spans residues 16-36 (FLVK…SVVA), 83-103 (TATL…YEQV), 120-140 (FLSG…LELI), 191-211 (FSVT…AYDL), 240-260 (LLCG…FEVC), and 294-314 (FFVG…TSFF).

This sequence belongs to the mitochondrial carrier (TC 2.A.29) family.

It localises to the mitochondrion inner membrane. This is an uncharacterized protein from Schizosaccharomyces pombe (strain 972 / ATCC 24843) (Fission yeast).